The chain runs to 143 residues: Large ribosomal subunit protein uL15 (143 aa).

The span at 1–13 (MIRKKKKVKKIRG) shows a compositional bias: basic residues. The segment at 1-39 (MIRKKKKVKKIRGSRTCGGGSHKKRRGAGNKGGRGMAGG) is disordered. A compositionally biased stretch (gly residues) spans 29 to 38 (GNKGGRGMAG).

It belongs to the universal ribosomal protein uL15 family. In terms of assembly, part of the 50S ribosomal subunit.

Binds to the 23S rRNA. This chain is Large ribosomal subunit protein uL15, found in Methanocaldococcus jannaschii (strain ATCC 43067 / DSM 2661 / JAL-1 / JCM 10045 / NBRC 100440) (Methanococcus jannaschii).